Reading from the N-terminus, the 361-residue chain is Biotin synthase (361 aa).

The Radical SAM core domain maps to 47-278 (VHGDEVALCG…AAHIFVMGGR (232 aa)). [4Fe-4S] cluster is bound by residues cysteine 65, cysteine 69, and cysteine 72. [2Fe-2S] cluster-binding residues include serine 110, cysteine 143, and cysteine 203. Positions 323 to 361 (TLRPPDTGKPWAFDGHAPSDADWNRKAAEPRPRPLPVVR) are disordered. The span at 339 to 354 (APSDADWNRKAAEPRP) shows a compositional bias: basic and acidic residues.

This sequence belongs to the radical SAM superfamily. Biotin synthase family. As to quaternary structure, homodimer. Requires [4Fe-4S] cluster as cofactor. It depends on [2Fe-2S] cluster as a cofactor.

It catalyses the reaction (4R,5S)-dethiobiotin + (sulfur carrier)-SH + 2 reduced [2Fe-2S]-[ferredoxin] + 2 S-adenosyl-L-methionine = (sulfur carrier)-H + biotin + 2 5'-deoxyadenosine + 2 L-methionine + 2 oxidized [2Fe-2S]-[ferredoxin]. It participates in cofactor biosynthesis; biotin biosynthesis; biotin from 7,8-diaminononanoate: step 2/2. Its function is as follows. Catalyzes the conversion of dethiobiotin (DTB) to biotin by the insertion of a sulfur atom into dethiobiotin via a radical-based mechanism. The protein is Biotin synthase of Anaeromyxobacter sp. (strain K).